Here is a 196-residue protein sequence, read N- to C-terminus: MIPVVIEQTSRGERSYDIYSRLLKDRIIMLTGPVEDNMANSIIAQLLFLDAQDNTKDIYLYVNTPGGSVSAGLAIVDTMNFIKSDVQTIVMGMAASMGTIIASSGTKGKRFMLPNAEYLIHQPMGGTGSGTQQTDMAIVAEQLLKTRKRLEKILSDNSGKTIKQIHKDAERDYWMDAKETLEYGFIDAIMENNELK.

Ser96 functions as the Nucleophile in the catalytic mechanism. Residue His121 is part of the active site.

The protein belongs to the peptidase S14 family. As to quaternary structure, fourteen ClpP subunits assemble into 2 heptameric rings which stack back to back to give a disk-like structure with a central cavity, resembling the structure of eukaryotic proteasomes.

Its subcellular location is the cytoplasm. It catalyses the reaction Hydrolysis of proteins to small peptides in the presence of ATP and magnesium. alpha-casein is the usual test substrate. In the absence of ATP, only oligopeptides shorter than five residues are hydrolyzed (such as succinyl-Leu-Tyr-|-NHMec, and Leu-Tyr-Leu-|-Tyr-Trp, in which cleavage of the -Tyr-|-Leu- and -Tyr-|-Trp bonds also occurs).. In terms of biological role, cleaves peptides in various proteins in a process that requires ATP hydrolysis. Has a chymotrypsin-like activity. Plays a major role in the degradation of misfolded proteins. The protein is ATP-dependent Clp protease proteolytic subunit of Streptococcus uberis (strain ATCC BAA-854 / 0140J).